The following is a 378-amino-acid chain: MKILVDENMPYARDLFSRLGEVTAVPGRPIAVAQLADADALMVRSVTKVNESLLAGKPIKFVGTATAGTDHVDEAWLKQAGIGFSAAPGCNAIAVVEYVFSSLLMLAERDGFSLHDRTVGIVGVGNVGRRLQARLEALGIKTLLCDPPRADRGDEGDFRSLDELVQHADILTFHTPLFKDGPYKTLHLADEKLIRSLKPGAILINACRGAVVDNTALLTCLNEGQKLSVVLDVWEGEPELNVELLTKVDIGTPHIAGYTLEGKARGTTQVFEAYSKFIGHEQHVALDTLLPAPEFGRITLHGPLDQPTLKRLVHLVYDVRRDDAPLRKVAGIPGEFDKLRKNYLERREWSSLYVICDDASAASLLCKLGFNAVHHPAR.

2 residues coordinate substrate: Ser45 and Thr66. Residues Asp146 and Thr175 each coordinate NAD(+). The active site involves Arg208. Position 232 (Asp232) interacts with NAD(+). The active site involves Glu237. His254 serves as the catalytic Proton donor. Residue Gly257 coordinates NAD(+). Tyr258 is a binding site for substrate.

It belongs to the D-isomer specific 2-hydroxyacid dehydrogenase family. PdxB subfamily. Homodimer.

The protein localises to the cytoplasm. The catalysed reaction is 4-phospho-D-erythronate + NAD(+) = (R)-3-hydroxy-2-oxo-4-phosphooxybutanoate + NADH + H(+). The protein operates within cofactor biosynthesis; pyridoxine 5'-phosphate biosynthesis; pyridoxine 5'-phosphate from D-erythrose 4-phosphate: step 2/5. Its function is as follows. Catalyzes the oxidation of erythronate-4-phosphate to 3-hydroxy-2-oxo-4-phosphonooxybutanoate. The chain is Erythronate-4-phosphate dehydrogenase from Shigella boydii serotype 4 (strain Sb227).